Consider the following 299-residue polypeptide: Tyrosine recombinase XerC (299 aa).

One can recognise a Core-binding (CB) domain in the interval 1–85 (MERQLEAYCA…AVRGLYRYLN (85 aa)). Residues 106–285 (RLPKVLDTDR…DFQHLAAVYD (180 aa)) form the Tyr recombinase domain. Active-site residues include R146, K170, H237, R240, and H263. The active-site O-(3'-phospho-DNA)-tyrosine intermediate is the Y272.

This sequence belongs to the 'phage' integrase family. XerC subfamily. As to quaternary structure, forms a cyclic heterotetrameric complex composed of two molecules of XerC and two molecules of XerD.

The protein resides in the cytoplasm. Functionally, site-specific tyrosine recombinase, which acts by catalyzing the cutting and rejoining of the recombining DNA molecules. The XerC-XerD complex is essential to convert dimers of the bacterial chromosome into monomers to permit their segregation at cell division. It also contributes to the segregational stability of plasmids. The sequence is that of Tyrosine recombinase XerC from Pseudomonas putida (strain W619).